The following is a 323-amino-acid chain: GDP-mannose 4,6-dehydratase (323 aa).

NADP(+) contacts are provided by residues 11–14, Arg36, 59–60, and 81–85; these read TGQD, DM, and LAAQS. Thr126 is an active-site residue. Active-site nucleophile residues include Glu128 and Tyr150. NADP(+) is bound by residues Lys154, His180, and Arg185.

This sequence belongs to the NAD(P)-dependent epimerase/dehydratase family. GDP-mannose 4,6-dehydratase subfamily. Homotetramer. It depends on NADP(+) as a cofactor.

It carries out the reaction GDP-alpha-D-mannose = GDP-4-dehydro-alpha-D-rhamnose + H2O. It functions in the pathway bacterial outer membrane biogenesis; lipopolysaccharide biosynthesis. Its function is as follows. Catalyzes the conversion of GDP-D-mannose to GDP-4-dehydro-6-deoxy-D-mannose. This is GDP-mannose 4,6-dehydratase from Pseudomonas aeruginosa (strain ATCC 15692 / DSM 22644 / CIP 104116 / JCM 14847 / LMG 12228 / 1C / PRS 101 / PAO1).